Reading from the N-terminus, the 133-residue chain is Small ribosomal subunit protein eS24y (133 aa).

The disordered stretch occupies residues 104–133 (KSRKQIKERKNRAKKIRGVKKTKAGDTKKK). The span at 109 to 125 (IKERKNRAKKIRGVKKT) shows a compositional bias: basic residues.

This sequence belongs to the eukaryotic ribosomal protein eS24 family.

This is Small ribosomal subunit protein eS24y (RPS24B) from Arabidopsis thaliana (Mouse-ear cress).